The following is a 316-amino-acid chain: Methionyl-tRNA formyltransferase (316 aa).

112-115 serves as a coordination point for (6S)-5,6,7,8-tetrahydrofolate; the sequence is SLLP.

This sequence belongs to the Fmt family.

It carries out the reaction L-methionyl-tRNA(fMet) + (6R)-10-formyltetrahydrofolate = N-formyl-L-methionyl-tRNA(fMet) + (6S)-5,6,7,8-tetrahydrofolate + H(+). Its function is as follows. Attaches a formyl group to the free amino group of methionyl-tRNA(fMet). The formyl group appears to play a dual role in the initiator identity of N-formylmethionyl-tRNA by promoting its recognition by IF2 and preventing the misappropriation of this tRNA by the elongation apparatus. The sequence is that of Methionyl-tRNA formyltransferase from Actinobacillus pleuropneumoniae serotype 7 (strain AP76).